The chain runs to 225 residues: MDVVFALGGSVLMPKEGASTENIQNYAQAFKKLKEMGHRVSVVVGGGNTARQYISVAREFTNESFCDEIGILATRMNSMLLISALGKDAVKQVPENFKDAELILNMDKILVMGGTHPAHTTDAVSATLAEFIDADLLVIATNVDGVYTKDPRCNEDAVKLDKINTKELLEITGSNSMSAGSSGVVDPLASKIIDRAKLKTIVIKGIPEEILASISGNHNGTTITP.

Residue 9 to 10 participates in ATP binding; sequence GS. Gly46 serves as a coordination point for UMP. Residues Gly47 and Arg51 each contribute to the ATP site. UMP is bound by residues Asp67 and 115 to 121; that span reads THPAHTT. Positions 141, 142, 147, and 150 each coordinate ATP.

Belongs to the UMP kinase family. In terms of assembly, homohexamer.

It is found in the cytoplasm. It catalyses the reaction UMP + ATP = UDP + ADP. It participates in pyrimidine metabolism; CTP biosynthesis via de novo pathway; UDP from UMP (UMPK route): step 1/1. Inhibited by UTP. Its function is as follows. Catalyzes the reversible phosphorylation of UMP to UDP. The protein is Uridylate kinase of Methanococcus maripaludis (strain C7 / ATCC BAA-1331).